The following is a 915-amino-acid chain: Altered inheritance of mitochondria protein 3 (915 aa).

A disordered region spans residues 30–915; the sequence is VGKSGYNASK…VPAEENRLRK (886 aa). Residues 64 to 77 show a composition bias toward acidic residues; it reads DEYSGDDSYSDDDS. A compositionally biased stretch (polar residues) spans 103–114; sequence QQVQATSSSHSV. 2 stretches are compositionally biased toward low complexity: residues 140–152 and 162–249; these read QQPA…AANQ and QSQM…QQPP. Polar residues predominate over residues 253 to 269; it reads GQPSNQFQLPEPQQRQT. Positions 283-295 are enriched in low complexity; it reads AQNQAQNQGQFQA. Polar residues predominate over residues 296 to 373; it reads TPLSQLQNMQ…EVNQQNNLMN (78 aa). Residues 383 to 404 show a composition bias toward low complexity; sequence QPPMQQQPPMQQQPPMQQQPPM. Over residues 405 to 414 the composition is skewed to pro residues; it reads QQQPPMPPRG. The segment covering 426-440 has biased composition (polar residues); it reads PNINANAQLPASSGI. Residues 470–482 show a composition bias toward basic and acidic residues; sequence THRDRGTETRPPS. A compositionally biased stretch (polar residues) spans 502-534; it reads RASTLDSSSVPVNSIPAHQNQPIYMQDNSSSVE. A compositionally biased stretch (basic and acidic residues) spans 556–566; it reads RVTEQNLEKSA. Over residues 654-663 the composition is skewed to low complexity; the sequence is SMESSTPSLP. Polar residues predominate over residues 696-716; the sequence is PSHSQVNDSNKESSAPRTHNF. The span at 736-746 shows a compositional bias: basic and acidic residues; it reads LLERKSEIDVK. Positions 783–793 are enriched in low complexity; it reads NQNQNQNQNQN. The span at 831–842 shows a compositional bias: basic and acidic residues; it reads IPPKFEKIETSR.

Belongs to the AIM3 family.

It is found in the membrane raft. This Vanderwaltozyma polyspora (strain ATCC 22028 / DSM 70294 / BCRC 21397 / CBS 2163 / NBRC 10782 / NRRL Y-8283 / UCD 57-17) (Kluyveromyces polysporus) protein is Altered inheritance of mitochondria protein 3 (AIM3).